A 254-amino-acid polypeptide reads, in one-letter code: 3-dehydroquinate dehydratase (254 aa).

3-dehydroquinate-binding positions include 47 to 49 and Arg83; that span reads EWR. The Proton donor/acceptor role is filled by His144. The active-site Schiff-base intermediate with substrate is Lys171. Positions 214, 233, and 237 each coordinate 3-dehydroquinate.

This sequence belongs to the type-I 3-dehydroquinase family. Homodimer.

The enzyme catalyses 3-dehydroquinate = 3-dehydroshikimate + H2O. The protein operates within metabolic intermediate biosynthesis; chorismate biosynthesis; chorismate from D-erythrose 4-phosphate and phosphoenolpyruvate: step 3/7. Involved in the third step of the chorismate pathway, which leads to the biosynthesis of aromatic amino acids. Catalyzes the cis-dehydration of 3-dehydroquinate (DHQ) and introduces the first double bond of the aromatic ring to yield 3-dehydroshikimate. This is 3-dehydroquinate dehydratase from Clostridium botulinum (strain Eklund 17B / Type B).